A 387-amino-acid chain; its full sequence is Adaptive-response sensory kinase SasA (387 aa).

The interval 1–97 (MGESLSPQAL…TDQLANQLPQ (97 aa)) is interacts with KaiC. The 225-residue stretch at 158–382 (LVAHDLRNPL…TFHFTMPVYR (225 aa)) folds into the Histidine kinase domain. A Phosphohistidine; by autocatalysis modification is found at His161.

As to quaternary structure, homooligomerizes. Part of the circadian clock (KaiA, KaiB, KaiC, CikA, RpaA, SasA), the composition of which varies during the circadian cycle. Binds to the CI domain of KaiC; KaiB(fs) and SasA compete for the binding site. Binds preferentially to doubly phosphorylated KaiC. Interacts with LdpA. In terms of processing, autophosphorylates in vitro.

It catalyses the reaction ATP + protein L-histidine = ADP + protein N-phospho-L-histidine.. Member of the two-component regulatory system SasA/RpaA involved in genome-wide circadian gene expression. One of three clock output pathways. Participates in the KaiABC clock protein complex, which constitutes the main circadian regulator in cyanobacteria, via its interaction with KaiC. Required for robustness of the circadian rhythm of gene expression and involved in clock output. KaiC enhances the autophosphorylation activity of SasA, which then transfers its phosphate group to RpaA to activate it. Phosphotransfer is maximal when KaiC phosphorylation is active during the circadian cycle; this two-component system is activated by fully phosphorylated KaiC. A very robust clock is reconstituted with KaiA, KaiB, KaiC, SasA, CikA and RpaA; output is measured by transcription from an appropriate reporter. In addition to its output function, recruits fold-shifted KaiB (KaiB(fs)) to KaiC to cooperatively form the KaiB(6):KaiC(6) complex (independent of SasA kinase activity); at physiological concentrations increases their association. At higher concentrations SasA and KaiB(fs) compete to bind to KaiC. Mutations that decrease cooperativity nearly phenocopy a deletion mutation. Functionally, autophosphorylation and phosphotransfer activities are not essential for clock rhythms in continuous light, but they are essential for adaptation to light/dark cycles. The protein is Adaptive-response sensory kinase SasA of Synechococcus elongatus (strain ATCC 33912 / PCC 7942 / FACHB-805) (Anacystis nidulans R2).